A 276-amino-acid chain; its full sequence is NH(3)-dependent NAD(+) synthetase (276 aa).

G51–S58 is an ATP binding site. D57 is a binding site for Mg(2+). Deamido-NAD(+) is bound at residue R148. T168 contacts ATP. E173 contacts Mg(2+). The deamido-NAD(+) site is built by K181 and D188. The ATP site is built by K197 and T219. A deamido-NAD(+)-binding site is contributed by H268–K269.

The protein belongs to the NAD synthetase family. In terms of assembly, homodimer.

The catalysed reaction is deamido-NAD(+) + NH4(+) + ATP = AMP + diphosphate + NAD(+) + H(+). It functions in the pathway cofactor biosynthesis; NAD(+) biosynthesis; NAD(+) from deamido-NAD(+) (ammonia route): step 1/1. Catalyzes the ATP-dependent amidation of deamido-NAD to form NAD. Uses ammonia as a nitrogen source. The chain is NH(3)-dependent NAD(+) synthetase from Streptomyces coelicolor (strain ATCC BAA-471 / A3(2) / M145).